Consider the following 1029-residue polypeptide: Huntingtin-interacting protein 1 (1029 aa).

An ENTH domain is found at 32-160; that stretch reads ERESFERTQT…EYHTKNPRFP (129 aa). Ser-338 carries the post-translational modification Phosphoserine. A coiled-coil region spans residues 375–636; it reads HLIERLYREI…IQEALSQLEE (262 aa). The pDED stretch occupies residues 410–491; it reads SELEAELAEQ…HADLLRKNAE (82 aa). The I/LWEQ domain occupies 763-1004; the sequence is GLDIKQEELG…ELRKKHYELA (242 aa). Residues 859–916 form an important for actin binding region; sequence RWTEGLISASKAVGWGATIMVDAADLVVQGKGKFEELMVCSREIAASTAQLVAASKVK. The disordered stretch occupies residues 1009–1029; the sequence is GWEEGTEASPSTVQEAIPDKE.

Belongs to the SLA2 family. Homodimer. Binds actin. Binds HTT (via N-terminus). This interaction is restricted to the brain. Binds to IFT57. In normal conditions, it poorly interacts with IFT57, HIP1 being strongly associated with HTT. However, in mutant HTT proteins with a long poly-Gln region, interaction between HTT and HIP1 is inhibited, promoting the interaction between HIP1 and IFT57. Interacts with CLTB (via N-terminus). Interacts (via coiled coil domain) with AR. Interacts with AP2A1, AP2A2, CLTC and HIP1R. Interacts with GRIA1, GRIN2A and GRIN2B. In terms of tissue distribution, most abundantly expressed in brain. In brain, expressed in cortical tissue, hippocampus, the molecular layer of the cerebellum and olfactory bulb. Also expressed in spinal cord and bone marrow (at protein level). Expressed in reproductive tissues.

The protein resides in the cytoplasm. The protein localises to the nucleus. Its subcellular location is the endomembrane system. It is found in the cytoplasmic vesicle. It localises to the clathrin-coated vesicle membrane. In terms of biological role, plays a role in clathrin-mediated endocytosis and trafficking. Involved in regulating AMPA receptor trafficking in the central nervous system in an NMDA-dependent manner. Regulates presynaptic nerve terminal activity. Enhances androgen receptor (AR)-mediated transcription. May act as a proapoptotic protein that induces cell death by acting through the intrinsic apoptosis pathway. Binds 3-phosphoinositides (via ENTH domain). May act through the ENTH domain to promote cell survival by stabilizing receptor tyrosine kinases following ligand-induced endocytosis. May play a functional role in the cell filament networks. May be required for differentiation, proliferation, and/or survival of somatic and germline progenitors. The polypeptide is Huntingtin-interacting protein 1 (Mus musculus (Mouse)).